A 330-amino-acid polypeptide reads, in one-letter code: Protein pelota homolog (330 aa).

This sequence belongs to the eukaryotic release factor 1 family. Pelota subfamily. Monomer. It depends on a divalent metal cation as a cofactor.

The protein resides in the cytoplasm. May function in recognizing stalled ribosomes, interact with stem-loop structures in stalled mRNA molecules, and effect endonucleolytic cleavage of the mRNA. May play a role in the release non-functional ribosomes and degradation of damaged mRNAs. Has endoribonuclease activity. This Pyrobaculum neutrophilum (strain DSM 2338 / JCM 9278 / NBRC 100436 / V24Sta) (Thermoproteus neutrophilus) protein is Protein pelota homolog.